The chain runs to 200 residues: Small ribosomal subunit protein eS1 (200 aa).

This sequence belongs to the eukaryotic ribosomal protein eS1 family.

In Thermococcus sibiricus (strain DSM 12597 / MM 739), this protein is Small ribosomal subunit protein eS1.